The sequence spans 259 residues: Chloroplastic import inner membrane translocase subunit HP30-2 (259 aa).

4 helical membrane passes run alanine 55–leucine 75, asparagine 108–lysine 124, alanine 135–glycine 155, and methionine 158–glycine 178.

Belongs to the Tim17/Tim22/Tim23 family. Probable component of a protein-conducting channel made of HP30-1, HP30-2 and HP20 that mediates the import of transit sequence-less proteins into the chloroplastic inner membrane. Interacts with CEQORH.

It is found in the mitochondrion membrane. The protein localises to the plastid. It localises to the chloroplast inner membrane. Together with HP30-1 and HP20, triggers the import and insertion of transit sequence-less multi-pass transmembrane proteins (e.g. CEQORH) into the chloroplastic inner membrane. The sequence is that of Chloroplastic import inner membrane translocase subunit HP30-2 from Arabidopsis thaliana (Mouse-ear cress).